The following is a 647-amino-acid chain: S-adenosyl-L-methionine-dependent tRNA 4-demethylwyosine synthase (647 aa).

The region spanning 50 to 198 (GKIFFISQTG…AFQDWCDGVI (149 aa)) is the Flavodoxin-like domain. Residues 56–60 (SQTGT) and 142–174 (VFGV…LEMI) each bind FMN. Residues 316-559 (YGIESHRCME…LSLKSNGEYE (244 aa)) form the Radical SAM core domain. Residues Cys332, Cys336, and Cys339 each contribute to the [4Fe-4S] cluster site.

It belongs to the TYW1 family. Requires [4Fe-4S] cluster as cofactor.

The enzyme catalyses N(1)-methylguanosine(37) in tRNA(Phe) + pyruvate + S-adenosyl-L-methionine = 4-demethylwyosine(37) in tRNA(Phe) + 5'-deoxyadenosine + L-methionine + CO2 + H2O. It functions in the pathway tRNA modification; wybutosine-tRNA(Phe) biosynthesis. Its function is as follows. Probable component of the wybutosine biosynthesis pathway. Wybutosine is a hyper modified guanosine with a tricyclic base found at the 3'-position adjacent to the anticodon of eukaryotic phenylalanine tRNA. Catalyzes the condensation of N-methylguanine with 2 carbon atoms from pyruvate to form the tricyclic 4-demethylwyosine, an intermediate in wybutosine biosynthesis. The polypeptide is S-adenosyl-L-methionine-dependent tRNA 4-demethylwyosine synthase (TYW1) (Arabidopsis thaliana (Mouse-ear cress)).